A 249-amino-acid polypeptide reads, in one-letter code: 2,3-bisphosphoglycerate-dependent phosphoglycerate mutase (249 aa).

Substrate-binding positions include Arg-8–Asn-15, Thr-21–Gly-22, Arg-60, Glu-87–Tyr-90, Lys-98, Arg-114–Arg-115, and Gly-183–Asn-184. The active-site Tele-phosphohistidine intermediate is the His-9. The Proton donor/acceptor role is filled by Glu-87.

Belongs to the phosphoglycerate mutase family. BPG-dependent PGAM subfamily. As to quaternary structure, homodimer.

It carries out the reaction (2R)-2-phosphoglycerate = (2R)-3-phosphoglycerate. It participates in carbohydrate degradation; glycolysis; pyruvate from D-glyceraldehyde 3-phosphate: step 3/5. Catalyzes the interconversion of 2-phosphoglycerate and 3-phosphoglycerate. The protein is 2,3-bisphosphoglycerate-dependent phosphoglycerate mutase of Azoarcus sp. (strain BH72).